The following is an 897-amino-acid chain: MGMATYAVVDLETTGNQLDFDDIIQIGITFVRNNQIIDTYHSMIRTNLEIPPFIQALTSIEENMLQQAPYFNQVAEEIYDKIKDCIFVAHNVDFDLNFIKKAFKDCNIQYRPKKVIDTLEIFKIAFPTDKSYQLSELAEAHGITLANAHRADEDAATTAKLMILAFEKFEKLPLDTLKQLYYLSKQLKYDLYDIFFEMVRQYDAKPLDKSYEKFEQIIYRKQVDFKKPTTNYNGSLKSLYSKAVDQLGLTYRPQQLYLAETILDQLMHSEKAMIEASLGSGKSLAYLLAALMYNIETGKHVMISTNTKLLQSQLLEKDIPAMNEALNFKINALLIKSKSDYISLGLISQILKDDTSNYEVNILKMQLLIWITETPSGDIQELNLKGGQKMYFDQKIETYVPARHDVHYYNFIKRNAQNIQIGITNHAHLIHSDVENSIYQLFDDCIVDEAHRLPDYALNQVTNELSYADIKYQLGLIGKNENEKLLKAIDQLEKQRILEKLDIAPIDIFGLKASMNEIHELNEQLFSTIFTIINDSDVYDDDIHRFHNVFTFETKDILKDLHAIIDKLNKTLEIFNGISHKTVKSLRKQLLYLKDKFKNIEQSLKAGHTSFISIKNLSQKSTIRLYVKDYAVKDVLTKQVLEKFKSLIFISGTLKFNHSFDAFKQLFNKDVHFNTFEVNTSLQSAKNTSVFIPSDVASYQYKNIDEYVASIVSYIIEYTTITSSKCLVLFTSYKMMHMVQDMLNELPEFEDYVVLTQQQNQNYKIVQQFNNFDKAILLGTSTFFEGFDFQANGIKCVMIAKLPFMNKHNAKYWLMDSEFTSTFKEYVLPDAVTRFRQGLGRLIRNENDRGIIVSFDDRLINSNYKNFFEQTLENYRQKKGDIQQFGKLLRQIQKKKK.

Positions 8-161 (VVDLETTGNQ…DEDAATTAKL (154 aa)) constitute an Exonuclease domain. In terms of domain architecture, Helicase ATP-binding spans 241–496 (SKAVDQLGLT…KAIDQLEKQR (256 aa)). 276–283 (ASLGSGKS) serves as a coordination point for ATP. The short motif at 448–451 (DEAH) is the DEAH box element. Positions 703–893 (NIDEYVASIV…QFGKLLRQIQ (191 aa)) constitute a Helicase C-terminal domain.

It belongs to the helicase family. DinG subfamily. Type 2 sub-subfamily. In terms of assembly, monomer in solution.

Its activity is regulated as follows. The nuclease activity is inhibited by ATP or ADP. Functionally, 3'-5' exonuclease acting on single-stranded DNA (ssDNA) and RNA (ssRNA) substrates. Displays ssDNA-stimulated ATPase activity, but lacks helicase activity. This Staphylococcus aureus (strain MRSA252) protein is 3'-5' exonuclease DinG.